Consider the following 72-residue polypeptide: Lantibiotic Flvbeta.e (72 aa).

The propeptide at 1-34 (MNNKEFNMEQFKKLAAVVSEDELDEMLDENVTGA) is cleaved by FlvT. Positions 36 to 40 (SSIPC) form a cross-link, lanthionine (Ser-Cys); by FlvM2. Ser37 bears the 2,3-didehydroalanine (Ser); by FlvM2 mark. Thr48 and Thr49 each carry 2,3-didehydrobutyrine; by FlvM2. 3 consecutive cross-links (beta-methyllanthionine (Thr-Cys); by FlvM2) follow at residues 55–61 (TTGFDWC), 63–66 (TGAC), and 67–70 (TTSC).

Post-translationally, contains LL-lanthionine and DL-beta-methyllanthionine, when coepressed in E.coli with the flavecin synthetase FlvM2.

It is found in the secreted. In terms of biological role, lanthionine-containing peptide antibiotic (lantibiotic) that is probably active on Gram-positive bacteria, since its analog [Del1]Flvbeta.e shows antibacterial activity against Gram-positive bacteria. This activity is not synergistically enhanced by [Del2]Flvalpha.a, an analog of Flvalpha.a, which is encoded by the same operon than Flvbeta.e. The bactericidal activity of lantibiotics is based on depolarization of energized bacterial cytoplasmic membranes, initiated by the formation of aqueous transmembrane pores. This chain is Lantibiotic Flvbeta.e, found in Ruminococcus flavefaciens.